Here is a 209-residue protein sequence, read N- to C-terminus: Pyroglutamyl-peptidase 1 (209 aa).

Residues glutamate 85, cysteine 149, and histidine 168 contribute to the active site.

It belongs to the peptidase C15 family. As to quaternary structure, monomer.

The protein resides in the cytoplasm. It catalyses the reaction Release of an N-terminal pyroglutamyl group from a polypeptide, the second amino acid generally not being Pro.. In terms of biological role, removes 5-oxoproline from various penultimate amino acid residues except L-proline. The polypeptide is Pyroglutamyl-peptidase 1 (Pgpep1) (Rattus norvegicus (Rat)).